Reading from the N-terminus, the 96-residue chain is Co-chaperonin GroES (96 aa).

Belongs to the GroES chaperonin family. Heptamer of 7 subunits arranged in a ring. Interacts with the chaperonin GroEL.

It localises to the cytoplasm. Functionally, together with the chaperonin GroEL, plays an essential role in assisting protein folding. The GroEL-GroES system forms a nano-cage that allows encapsulation of the non-native substrate proteins and provides a physical environment optimized to promote and accelerate protein folding. GroES binds to the apical surface of the GroEL ring, thereby capping the opening of the GroEL channel. This chain is Co-chaperonin GroES, found in Paracidovorax citrulli (strain AAC00-1) (Acidovorax citrulli).